Reading from the N-terminus, the 1399-residue chain is DNA-directed RNA polymerase subunit beta' (1399 aa).

Residues C70, C72, C85, and C88 each contribute to the Zn(2+) site. Positions 460, 462, and 464 each coordinate Mg(2+). Residues C814, C888, C895, and C898 each coordinate Zn(2+).

Belongs to the RNA polymerase beta' chain family. As to quaternary structure, the RNAP catalytic core consists of 2 alpha, 1 beta, 1 beta' and 1 omega subunit. When a sigma factor is associated with the core the holoenzyme is formed, which can initiate transcription. Mg(2+) serves as cofactor. The cofactor is Zn(2+).

It catalyses the reaction RNA(n) + a ribonucleoside 5'-triphosphate = RNA(n+1) + diphosphate. In terms of biological role, DNA-dependent RNA polymerase catalyzes the transcription of DNA into RNA using the four ribonucleoside triphosphates as substrates. This Pseudomonas putida (strain ATCC 700007 / DSM 6899 / JCM 31910 / BCRC 17059 / LMG 24140 / F1) protein is DNA-directed RNA polymerase subunit beta'.